A 101-amino-acid polypeptide reads, in one-letter code: Salivary thrombin inhibitor anophelin (101 aa).

An N-terminal signal peptide occupies residues 1 to 21 (MASKVIVIALLCIALAAFVQG). The interval 26–101 (THGEEPEYDE…SDSSSGSTEN (76 aa)) is disordered. A compositionally biased stretch (acidic residues) spans 31 to 40 (PEYDEDDGAD). Residues 75–78 (DPGR) are blocks active site cleft of host thrombin in a reverse direction compared to substrates. Basic and acidic residues predominate over residues 75 to 87 (DPGRRPEFLKQHN). Residues 88-101 (NENQSDSSSGSTEN) are compositionally biased toward polar residues. N-linked (GlcNAc...) asparagine glycosylation occurs at asparagine 90.

This sequence belongs to the anophelin family. Interacts with human F2 (thrombin); the interaction results in thrombin inhibition.

The protein resides in the secreted. Salivary protein with anticoagulant activity that inhibits host thrombin (F2). The chain is Salivary thrombin inhibitor anophelin from Anopheles stephensi (Indo-Pakistan malaria mosquito).